Consider the following 497-residue polypeptide: 4,4'-diaponeurosporene oxygenase (497 aa).

Val-7–Ile-19 is a binding site for FAD.

Belongs to the carotenoid/retinoid oxidoreductase family. CrtP subfamily. Requires FAD as cofactor.

The enzyme catalyses all-trans-4,4'-diaponeurosporene + 2 AH2 + 2 O2 = 4,4'-diaponeurosporenal + 2 A + 3 H2O. Its pathway is carotenoid biosynthesis; staphyloxanthin biosynthesis; staphyloxanthin from farnesyl diphosphate: step 3/5. Involved in the biosynthesis of the yellow-orange carotenoid staphyloxanthin, which plays a role in the virulence via its protective function against oxidative stress. Catalyzes the oxidation of the terminal methyl side group of 4,4'-diaponeurosporene to form 4,4'-diaponeurosporen-4-al. The C40 carotenoid lycopene is a poor substrate. The protein is 4,4'-diaponeurosporene oxygenase of Staphylococcus aureus (strain Mu50 / ATCC 700699).